The primary structure comprises 391 residues: Formate-dependent phosphoribosylglycinamide formyltransferase (391 aa).

N(1)-(5-phospho-beta-D-ribosyl)glycinamide-binding positions include 20–21 (EL) and Glu80. Residues Arg112, Lys153, 158–163 (SSGKGQ), 193–196 (EGFI), and Glu201 contribute to the ATP site. An ATP-grasp domain is found at 117–306 (RLAAETLGLP…EFALHVRAIL (190 aa)). 2 residues coordinate Mg(2+): Glu265 and Glu277. N(1)-(5-phospho-beta-D-ribosyl)glycinamide is bound by residues Asp284, Lys354, and 361–362 (RR).

Belongs to the PurK/PurT family. As to quaternary structure, homodimer.

The enzyme catalyses N(1)-(5-phospho-beta-D-ribosyl)glycinamide + formate + ATP = N(2)-formyl-N(1)-(5-phospho-beta-D-ribosyl)glycinamide + ADP + phosphate + H(+). Its pathway is purine metabolism; IMP biosynthesis via de novo pathway; N(2)-formyl-N(1)-(5-phospho-D-ribosyl)glycinamide from N(1)-(5-phospho-D-ribosyl)glycinamide (formate route): step 1/1. In terms of biological role, involved in the de novo purine biosynthesis. Catalyzes the transfer of formate to 5-phospho-ribosyl-glycinamide (GAR), producing 5-phospho-ribosyl-N-formylglycinamide (FGAR). Formate is provided by PurU via hydrolysis of 10-formyl-tetrahydrofolate. The protein is Formate-dependent phosphoribosylglycinamide formyltransferase of Shewanella oneidensis (strain ATCC 700550 / JCM 31522 / CIP 106686 / LMG 19005 / NCIMB 14063 / MR-1).